The primary structure comprises 681 residues: MTASPDYLVVLFGITAGATGAKLGSDEKELILLFWKVVDLANKKVGQLHEVLVRPDQLELTEDCKEETKIDVESLSSASQLDQALRQFNQSVSNELNIGVGTSFCLCTDGQLHVRQILHPEASKKNVLLPECFYSFFDLRKEFKKCCPGSPDIDKLDVATMTEYLNFEKSSSVSRYGASQVEDMGNIILAMISEPYNHRFSDPERVNYKFESGTCSKMELIDDNTVVRARGLPWQSSDQDIARFFKGLNIAKGGAALCLNAQGRRNGEALVRFVSEEHRDLALQRHKHHMGTRYIEVYKATGEDFLKIAGGTSNEVAQFLSKENQVIVRMRGLPFTATAEEVVAFFGQHCPITGGKEGILFVTYPDGRPTGDAFVLFACEEYAQNALRKHKDLLGKRYIELFRSTAAEVQQVLNRFSSAPLIPLPTPPIIPVLPQQFVPPTNVRDCIRLRGLPYAATIEDILDFLGEFATDIRTHGVHMVLNHQGRPSGDAFIQMKSADRAFMAAQKCHKKNMKDRYVEVFQCSAEEMNFVLMGGTLNRNGLSPPPCKLPCLSPPSYTFPAPAAVIPTEAAIYQPSVILNPRALQPSTAYYPAGTQLFMNYTAYYPSPPGSPNSLGYFPTAANLSGVPPQPGTVVRMQGLAYNTGVKEILNFFQGYQYATEDGLIHTNDQARTLPKEWVCI.

3 RRM domains span residues 225–302, 326–406, and 445–525; these read TVVR…KATG, VIVR…RSTA, and DCIR…QCSA. Ser543 carries the post-translational modification Phosphoserine. Arg582 carries the omega-N-methylarginine modification.

Belongs to the ESRP family. Epithelial cell-specific.

The protein localises to the nucleus. In terms of biological role, mRNA splicing factor that regulates the formation of epithelial cell-specific isoforms. Specifically regulates the expression of FGFR2-IIIb, an epithelial cell-specific isoform of FGFR2. Also regulates the splicing of CD44, CTNND1, ENAH, 3 transcripts that undergo changes in splicing during the epithelial-to-mesenchymal transition (EMT). Acts by directly binding specific sequences in mRNAs. Binds the GU-rich sequence motifs in the ISE/ISS-3, a cis-element regulatory region present in the mRNA of FGFR2. Regulates splicing and expression of genes involved in inner ear development, auditory hair cell differentiation, and cell fate specification in the cochlear epithelium. This chain is Epithelial splicing regulatory protein 1 (ESRP1), found in Homo sapiens (Human).